A 494-amino-acid polypeptide reads, in one-letter code: Succinoglycan biosynthesis transport protein ExoT (494 aa).

Transmembrane regions (helical) follow at residues 16–36, 44–64, 82–102, 105–125, 157–177, 215–235, 253–273, 297–317, 321–341, 343–363, 384–404, 421–441, and 447–467; these read WSVL…PILA, FGAV…GGAG, SVFW…FVFA, LATL…SLLI, LGAV…SLLA, FGMM…MVVI, FASI…FPTF, LLAP…LVLF, WAYA…LTPC, TFIP…WALI, AMIW…WVVF, PMIA…HFGA, and VLQL…LILL.

It belongs to the polysaccharide synthase family.

The protein localises to the cell membrane. Its pathway is glycan metabolism; exopolysaccharide biosynthesis. This is Succinoglycan biosynthesis transport protein ExoT (exoT) from Rhizobium meliloti (strain 1021) (Ensifer meliloti).